Reading from the N-terminus, the 157-residue chain is Snaclec EMS16 subunit alpha (157 aa).

Positions 1 to 23 (MGRFISVSFGLLVVFLSLSGTGA) are cleaved as a signal peptide. Disulfide bonds link Cys-27–Cys-38, Cys-55–Cys-152, and Cys-127–Cys-144. Residues 34-153 (YDQHCYLAIG…CEDLYPFVCK (120 aa)) form the C-type lectin domain.

Belongs to the snaclec family. In terms of assembly, heterodimer of subunits A and B; disulfide-linked. As to expression, expressed by the venom gland.

Its subcellular location is the secreted. Functionally, EMS16 is a potent and selective inhibitor of alpha-2/beta-1 (ITGA2/ITGB1) integrin and acts as a potent antagonist of platelet aggregation and cell migration. Binds specifically to the I domain of the alpha-2 subunit, in a metal ion-independent fashion. This chain is Snaclec EMS16 subunit alpha, found in Echis multisquamatus (Central Asian sand viper).